The chain runs to 295 residues: Transcription factor bHLH19 (295 aa).

The 50-residue stretch at 115–164 folds into the bHLH domain; that stretch reads VLAKEHVLAERKRREKLSEKFIALSALLPGLKKADKVTILDDAISRMKQL.

In terms of assembly, homodimer. As to expression, expressed in roots and leaves.

Its subcellular location is the nucleus. This is Transcription factor bHLH19 (BHLH19) from Arabidopsis thaliana (Mouse-ear cress).